The chain runs to 103 residues: Small ribosomal subunit protein bS6c (103 aa).

It belongs to the bacterial ribosomal protein bS6 family.

It is found in the plastid. Its subcellular location is the chloroplast. Binds together with bS18 to 16S ribosomal RNA. The sequence is that of Small ribosomal subunit protein bS6c from Gracilaria tenuistipitata var. liui (Red alga).